A 579-amino-acid polypeptide reads, in one-letter code: Carotenoid-cleaving dioxygenase, mitochondrial (579 aa).

Histidine 226, histidine 286, histidine 357, and histidine 573 together coordinate Fe cation.

The protein belongs to the carotenoid oxygenase family. The cofactor is Fe(2+). As to expression, highly expressed in retinal pigment epithelium. Also expressed in stomach, small intestine, liver, testis, kidney, adrenal gland, pancreas, heart, skeletal muscle and prostate (at protein level).

It localises to the mitochondrion. It carries out the reaction all-trans-beta-carotene + O2 = beta-ionone + all-trans-10'-apo-beta-carotenal. The catalysed reaction is 5-cis-lycopene + O2 = 5-cis-10'-apo-lycopenal + (3E,5E)-6,10-dimethylundeca-3,5,9-trien-2-one. The enzyme catalyses 13-cis-lycopene + O2 = 13-cis-10'-apo-lycopenal + (3E,5E)-6,10-dimethylundeca-3,5,9-trien-2-one. It catalyses the reaction lutein + O2 = (3R,6R)-hydroxy-alpha-ionone + (3R)-3-hydroxy-10'-apo-beta-carotenal. It carries out the reaction lutein + O2 = (3R,6R)-3-hydroxy-10'-apo-alpha-carotenal + (3R)-hydroxy-beta-ionone. The catalysed reaction is all-trans-zeaxanthin + 2 O2 = 4,9-dimethyldodeca-2,4,6,8,10-pentaenedial + 2 (3R)-hydroxy-beta-ionone. The enzyme catalyses all-trans-zeaxanthin + O2 = (3R)-3-hydroxy-10'-apo-beta-carotenal + (3R)-hydroxy-beta-ionone. It catalyses the reaction beta-cryptoxanthin + O2 = all-trans-10'-apo-beta-carotenal + (3R)-hydroxy-beta-ionone. It carries out the reaction all-trans-10'-apo-beta-carotenal + O2 = beta-ionone + 4,9-dimethyldodeca-2,4,6,8,10-pentaenedial. The catalysed reaction is (3R)-3-hydroxy-10'-apo-beta-carotenal + O2 = 4,9-dimethyldodeca-2,4,6,8,10-pentaenedial + (3R)-hydroxy-beta-ionone. The enzyme catalyses (3R,6R)-3-hydroxy-10'-apo-alpha-carotenal + O2 = (3R,6R)-hydroxy-alpha-ionone + 4,9-dimethyldodeca-2,4,6,8,10-pentaenedial. Its function is as follows. Broad specificity mitochondrial dioxygenase that mediates the asymmetric oxidative cleavage of carotenoids. Cleaves carotenes (pure hydrocarbon carotenoids) such as all-trans-beta-carotene and lycopene as well as xanthophylls (oxygenated carotenoids) such as zeaxanthin, lutein and beta-cryptoxanthin at both the 9,10 and the 9',10' carbon-carbon double bond. Through its function in carotenoids metabolism regulates oxidative stress and the production of important signaling molecules. This is Carotenoid-cleaving dioxygenase, mitochondrial from Homo sapiens (Human).